A 400-amino-acid chain; its full sequence is Probable vacuolar protease A (400 aa).

Positions 1–18 are cleaved as a signal peptide; it reads MKGSLLLAGATLLGCTSA. Positions 19–72 are cleaved as a propeptide — activation peptide; sequence KLHSLKLKKVSLKEQLEHADIDVQIKSLGQKYMGIRPEQHEQQMFKEQTPIEAE. The Peptidase A1 domain maps to 87-397; that stretch reads YFSEISIGTP…DLGKGTVGLA (311 aa). The active site involves D105. C118 and C123 are disulfide-bonded. N-linked (GlcNAc...) asparagine glycosylation is present at N140. D289 is a catalytic residue. C323 and C356 are disulfide-bonded. An N-linked (GlcNAc...) asparagine glycan is attached at N340.

It belongs to the peptidase A1 family.

Its subcellular location is the vacuole lumen. The protein resides in the secreted. The enzyme catalyses Hydrolysis of proteins with broad specificity for peptide bonds. Cleaves -Leu-Leu-|-Val-Tyr- bond in a synthetic substrate. Does not act on esters of Tyr or Arg.. Vacuolar aspartic endopeptidase which is probably also secreted and contributes to virulence. The chain is Probable vacuolar protease A (PEP2) from Trichophyton verrucosum (strain HKI 0517).